The following is a 124-amino-acid chain: Small ribosomal subunit protein uS12 (124 aa).

Residue Asp89 is modified to 3-methylthioaspartic acid. Residues 105-124 (QGVKNRKQARSRYGAKKEKS) are disordered. Residues 108-118 (KNRKQARSRYG) show a composition bias toward basic residues.

Belongs to the universal ribosomal protein uS12 family. Part of the 30S ribosomal subunit. Contacts proteins S8 and S17. May interact with IF1 in the 30S initiation complex.

Functionally, with S4 and S5 plays an important role in translational accuracy. In terms of biological role, interacts with and stabilizes bases of the 16S rRNA that are involved in tRNA selection in the A site and with the mRNA backbone. Located at the interface of the 30S and 50S subunits, it traverses the body of the 30S subunit contacting proteins on the other side and probably holding the rRNA structure together. The combined cluster of proteins S8, S12 and S17 appears to hold together the shoulder and platform of the 30S subunit. This Mycolicibacterium smegmatis (strain ATCC 700084 / mc(2)155) (Mycobacterium smegmatis) protein is Small ribosomal subunit protein uS12 (rpsL).